Reading from the N-terminus, the 765-residue chain is 5-methyltetrahydropteroyltriglutamate--homocysteine methyltransferase (765 aa).

5-methyltetrahydropteroyltri-L-glutamate is bound by residues 18–21 (REWK) and lysine 114. L-homocysteine is bound by residues 437 to 439 (IGS) and glutamate 490. Residues 437–439 (IGS) and glutamate 490 contribute to the L-methionine site. Residue tryptophan 567 coordinates 5-methyltetrahydropteroyltri-L-glutamate. Aspartate 605 serves as a coordination point for L-homocysteine. Aspartate 605 contributes to the L-methionine binding site. Glutamate 611 contributes to the 5-methyltetrahydropteroyltri-L-glutamate binding site. Zn(2+) contacts are provided by histidine 647, cysteine 649, and glutamate 671. The active-site Proton donor is histidine 700. Cysteine 732 lines the Zn(2+) pocket.

This sequence belongs to the vitamin-B12 independent methionine synthase family. Requires Zn(2+) as cofactor.

The enzyme catalyses 5-methyltetrahydropteroyltri-L-glutamate + L-homocysteine = tetrahydropteroyltri-L-glutamate + L-methionine. It participates in amino-acid biosynthesis; L-methionine biosynthesis via de novo pathway; L-methionine from L-homocysteine (MetE route): step 1/1. Catalyzes the transfer of a methyl group from 5-methyltetrahydrofolate to homocysteine resulting in methionine formation. In Listeria welshimeri serovar 6b (strain ATCC 35897 / DSM 20650 / CCUG 15529 / CIP 8149 / NCTC 11857 / SLCC 5334 / V8), this protein is 5-methyltetrahydropteroyltriglutamate--homocysteine methyltransferase.